The following is a 513-amino-acid chain: Serine/threonine-protein kinase pakH (513 aa).

The region spanning 42-294 (FEIQEKLGEG…PSQLLDHPFI (253 aa)) is the Protein kinase domain. Residues 48 to 56 (LGEGSFGSV) and K71 each bind ATP. D163 acts as the Proton acceptor in catalysis. The disordered stretch occupies residues 313–358 (KSKKRKSIGPSVSPKQQPNDNNNNNNNNKPQFLSKLLNNNSNSSND). Residues 331-357 (NDNNNNNNNNKPQFLSKLLNNNSNSSN) show a composition bias toward low complexity. A helical membrane pass occupies residues 493 to 512 (IVLYSTLGLILVLSVFFKFF).

Belongs to the protein kinase superfamily. STE Ser/Thr protein kinase family. STE20 subfamily. Requires Mg(2+) as cofactor.

Its subcellular location is the membrane. It catalyses the reaction L-seryl-[protein] + ATP = O-phospho-L-seryl-[protein] + ADP + H(+). The enzyme catalyses L-threonyl-[protein] + ATP = O-phospho-L-threonyl-[protein] + ADP + H(+). The protein is Serine/threonine-protein kinase pakH (pakH-1) of Dictyostelium discoideum (Social amoeba).